The following is a 298-amino-acid chain: uncharacterized protein (298 aa).

Transmembrane regions (helical) follow at residues 10–30 (VIYTAVSFIMWGLFPLYWKLL), 36–56 (LDILAHRIIWSFVFMCIVLFF), 76–96 (ILSLFLASILISINWFVYIWA), 101–121 (FLLEASLGYYINPLVSVLLGI), 142–162 (GVIISAFQYGSIPYVALLLAF), 179–199 (AIGLTLETFMIMPIALGYLLF), 212–232 (GTWLLLFLAGVFTALPLLLFA), 243–263 (VGILQYIAPTITLLIGLFVYH), and 271–291 (AFTFSCIWAALLLFTFSQVKW). 2 EamA domains span residues 17-148 (FIMW…ISAF) and 162-286 (FSFG…LFTF).

It belongs to the EamA transporter family.

It is found in the cell membrane. This is an uncharacterized protein from Bacillus subtilis (strain 168).